Here is a 134-residue protein sequence, read N- to C-terminus: S-protein homolog 31 (134 aa).

A signal peptide spans 1–21 (MKILSVFLFVFSIYIFGHVSG). N87 is a glycosylation site (N-linked (GlcNAc...) asparagine).

This sequence belongs to the plant self-incompatibility (S1) protein family.

The protein resides in the secreted. This is S-protein homolog 31 from Arabidopsis thaliana (Mouse-ear cress).